A 218-amino-acid polypeptide reads, in one-letter code: Deoxyribose-phosphate aldolase (218 aa).

Catalysis depends on D92, which acts as the Proton donor/acceptor. Residue K156 is the Schiff-base intermediate with acetaldehyde of the active site. K185 serves as the catalytic Proton donor/acceptor.

This sequence belongs to the DeoC/FbaB aldolase family. DeoC type 1 subfamily.

The protein localises to the cytoplasm. The enzyme catalyses 2-deoxy-D-ribose 5-phosphate = D-glyceraldehyde 3-phosphate + acetaldehyde. The protein operates within carbohydrate degradation; 2-deoxy-D-ribose 1-phosphate degradation; D-glyceraldehyde 3-phosphate and acetaldehyde from 2-deoxy-alpha-D-ribose 1-phosphate: step 2/2. Catalyzes a reversible aldol reaction between acetaldehyde and D-glyceraldehyde 3-phosphate to generate 2-deoxy-D-ribose 5-phosphate. This is Deoxyribose-phosphate aldolase from Desulfitobacterium hafniense (strain DSM 10664 / DCB-2).